The following is a 159-amino-acid chain: MLSVEILHEEIEPIDENLQNLLVRCLEAAAKLEEVQGEVVVTLVNNERIHELNRDYRGVDRPTDVLSFAMNEPGEGEMEIFIDEDEASEFPNMLGDIIISVPKAHEQAEDYGHSFERELGFLTVHGFLHLLGYDHGTPEEEKEMFSRQEKVLEEIGLTR.

Positions 125, 129, and 135 each coordinate Zn(2+).

It belongs to the endoribonuclease YbeY family. Requires Zn(2+) as cofactor.

The protein resides in the cytoplasm. Functionally, single strand-specific metallo-endoribonuclease involved in late-stage 70S ribosome quality control and in maturation of the 3' terminus of the 16S rRNA. In Brevibacillus brevis (strain 47 / JCM 6285 / NBRC 100599), this protein is Endoribonuclease YbeY.